The primary structure comprises 145 residues: Probable transport accessory protein MmpS2 (145 aa).

A helical membrane pass occupies residues Met11–Leu31.

This sequence belongs to the MmpS family.

The protein localises to the cell membrane. The protein is Probable transport accessory protein MmpS2 (mmpS2) of Mycobacterium bovis (strain ATCC BAA-935 / AF2122/97).